Consider the following 328-residue polypeptide: Peroxidase 59 (328 aa).

The N-terminal stretch at 1–28 is a signal peptide; it reads MKTQTKVMGGHVLLTVFTLCMLCSGVRA. Pyrrolidone carboxylic acid is present on Q29. Cystine bridges form between C39/C116, C72/C77, C122/C323, and C200/C232. Catalysis depends on H70, which acts as the Proton acceptor. Ca(2+)-binding residues include D71, V74, G76, D78, and S80. P163 is a binding site for substrate. Residue N182 is glycosylated (N-linked (GlcNAc...) asparagine). H193 contacts heme b. Residue T194 participates in Ca(2+) binding. N209 and N239 each carry an N-linked (GlcNAc...) asparagine glycan. The Ca(2+) site is built by D245, T248, T251, and D253. Residues N281 and N310 are each glycosylated (N-linked (GlcNAc...) asparagine).

Belongs to the peroxidase family. Classical plant (class III) peroxidase subfamily. It depends on heme b as a cofactor. Ca(2+) serves as cofactor. In terms of tissue distribution, slightly expressed in roots.

The protein localises to the secreted. It carries out the reaction 2 a phenolic donor + H2O2 = 2 a phenolic radical donor + 2 H2O. Its function is as follows. Removal of H(2)O(2), oxidation of toxic reductants, biosynthesis and degradation of lignin, suberization, auxin catabolism, response to environmental stresses such as wounding, pathogen attack and oxidative stress. These functions might be dependent on each isozyme/isoform in each plant tissue. This Arabidopsis thaliana (Mouse-ear cress) protein is Peroxidase 59 (PER59).